The sequence spans 993 residues: MATSSFNINELVASHGDKGLLATALVDKAAHEQLEEQLQHQRRGRKVYVRNVLSVKDSEVIRNRYGGKYDLHLTQQEFAPHGLAGALRLCETLDCLDSFPSSGLRQDLVLDFGGSWVTHYLRGHNVHCCSPCLGIRDKMRHTERLMNMRKIILNDPQQFDGRQPDFCTHPAADCKVQAHFAISIHGGYDMGFRGLCEAMNAHGTTILKGTMMFDGAMMFDDQGIIPELNCQWRKIRNAFSETEDVTPLVGKLNSTVFSRVRKFKTLVAFDFINESTMSYVHDWENIKSFLTDQTYSYKGMTYGIERCVINAGIMTYKIIGVPGMCPPELIRHCIWFPSIKDYVGLKIPASQDLVEWKTVRILTSTLRETEEIAMRCYNDKKAWMEQFKVILGVLSAKSSTIVINGMSMQSGERIDINDYHYIGFAILLHTKMKYEQLGKMYDMWNASSISKWFAALTRPVRVFFSSAVHALFPTLRPREEKEFLIKLSTFVTFNEECSFDGGEEWDVISSAAYVATQAVTDGKVLAAQKAEKLAEKLAQPVDEVSDSPEVPSSTPDDTADVCGKEQEVSELDSLSAQTRSPITRVAERATAMLEYAAYEKQLHDTTVSNLKRIWNMAGGDDKRNSLEGNLKFVFDTYFTVDPMVNIHFSTGRWMRPVPEGIVYSVGYNERGLGPKSDGELFIVNSECVICNSESLSAVTRSLQAPTGTISQVDGVAGCGKTTAIKSIFEPSTDMIVTANKKSAQDVRMALFKSSDSKEACAFVRTADSVLLNECPTVSRVLVDEVVLLHFGQLCAVMSKLKAVRAICFGDSEQIAFSSRDASFDMRFSKIIPDETSDADTTFRSPQDVVPLVRLMATKALPKGTHSKYTKWVSQSKVKRSVTSRSIASVTLVDLDSSRFYITMTQADKASLISRAKEMNLPKTFWNERIKTVHESQGISEDHVTLVRLKSTKCDLFKQFSYCLVALTRHKVTFRYEYCGVLNGDLIAECIARA.

Positions 50–409 (RNVLSVKDSE…TIVINGMSMQ (360 aa)) are methyltransferase. The 219-residue stretch at 72 to 290 (HLTQQEFAPH…HDWENIKSFL (219 aa)) folds into the Alphavirus-like MT domain. A disordered region spans residues 537–565 (LAQPVDEVSDSPEVPSSTPDDTADVCGKE). In terms of domain architecture, (+)RNA virus helicase ATP-binding spans 687–838 (CVICNSESLS…KIIPDETSDA (152 aa)). The ATP-dependent helicase stretch occupies residues 712–975 (VDGVAGCGKT…LTRHKVTFRY (264 aa)). An ATP-binding site is contributed by 714-721 (GVAGCGKT). A (+)RNA virus helicase C-terminal domain is found at 839-993 (DTTFRSPQDV…DLIAECIARA (155 aa)).

Belongs to the bromoviridae replication protein 1a family. In terms of assembly, interacts with RNA-directed RNA polymerase 2a.

It localises to the host endoplasmic reticulum membrane. Its function is as follows. Involved in the virus replication. Contains a helicase domain and a methyltransferase domain. The methyltransferase domain is probably involved in viral RNA capping. Involved in the formation of ER membrane spherular invaginations in which RNA replication complexes form. The polypeptide is Replication protein 1a (Cucumber mosaic virus (strain O) (CMV)).